Consider the following 706-residue polypeptide: Choline transporter-like protein 2 (706 aa).

Topologically, residues 1 to 33 (MGDERPHYYGKHGTPQKYDPTFKGPIYNRGCTD) are cytoplasmic. Threonine 14 is subject to Phosphothreonine. Residues 34 to 54 (IICCVFLLLAIVGYVAVGIIA) traverse the membrane as a helical segment. The Extracellular portion of the chain corresponds to 55–232 (WTHGDPRKVI…RIFEDYTVSW (178 aa)). 2 N-linked (GlcNAc...) asparagine glycosylation sites follow: asparagine 187 and asparagine 200. The chain crosses the membrane as a helical span at residues 233–253 (YWIIIGLVIAMAMSLLFIILL). Over 254–256 (RFL) the chain is Cytoplasmic. A helical membrane pass occupies residues 257–277 (AGIMVWVMIIMVILVLGYGIF). Topologically, residues 278-315 (HCYMEYSRLRGEAGSDVSLVDLGFQTDFRVYLHLRQTW) are extracellular. A helical membrane pass occupies residues 316–336 (LAFMIILSILEVIIILLLIFL). The Cytoplasmic portion of the chain corresponds to 337-364 (RKRILIAIALIKEASRAVGYVMCSLLYP). Residues 365-385 (LVTFFLLCLCIAYWASTAVFL) traverse the membrane as a helical segment. The Extracellular portion of the chain corresponds to 386–457 (STSNEAVYKI…FNAFMFFWLA (72 aa)). A glycan (N-linked (GlcNAc...) asparagine) is linked at asparagine 417. Residues 458–480 (NFVLALGQVTLAGAFASYYWALR) form a helical membrane-spanning segment. The Cytoplasmic segment spans residues 481 to 504 (KPDDLPAFPLFSAFGRALRYHTGS). The helical transmembrane segment at 505 to 525 (LAFGALILAIVQIIRVILEYL) threads the bilayer. At 526-563 (DQRLKAAENKFAKCLMTCLKCCFWCLEKFIKFLNRNAY) the chain is on the extracellular side. The helical transmembrane segment at 564-584 (IMIAIYGTNFCTSARNAFFLL) threads the bilayer. At 585-599 (MRNIIRVAVLDKVTD) the chain is on the cytoplasmic side. The chain crosses the membrane as a helical span at residues 600–620 (FLFLLGKLLIVGSVGILAFFF). Over 621–638 (FTHRIRIVQDTAPPLNYY) the chain is Extracellular. A helical transmembrane segment spans residues 639–659 (WVPILTVIVGSYLIAHGFFSV). Residues 660–706 (YGMCVDTLFLCFLEDLERNDGSAERPYFMSSTLKKLLNKTNKKAAES) lie on the Cytoplasmic side of the membrane.

The protein belongs to the CTL (choline transporter-like) family. Interacts with COCH. As to expression, present in supporting cells of the inner ear (at protein level). Expressed in inner ear vestibular tissue.

The protein localises to the cell membrane. Its subcellular location is the mitochondrion outer membrane. It carries out the reaction choline(out) + n H(+)(in) = choline(in) + n H(+)(out). The catalysed reaction is ethanolamine(out) + n H(+)(in) = ethanolamine(in) + n H(+)(out). Its function is as follows. Choline/H+ antiporter, mainly in mitochodria. Also acts as a low-affinity ethanolamine/H+ antiporter, regulating the supply of extracellular ethanolamine (Etn) for the CDP-Etn pathway, redistribute intracellular Etn and balance the CDP-Cho and CDP-Etn arms of the Kennedy pathway. Does not exhibit choline transporter activity. This Homo sapiens (Human) protein is Choline transporter-like protein 2.